The chain runs to 109 residues: Large ribosomal subunit protein eL30 (109 aa).

This sequence belongs to the eukaryotic ribosomal protein eL30 family.

This is Large ribosomal subunit protein eL30 (RPL30) from Yarrowia lipolytica (strain CLIB 122 / E 150) (Yeast).